The sequence spans 63 residues: Small ribosomal subunit protein eS31 (63 aa).

Residues Cys31, Cys34, Cys50, and Cys53 each coordinate Zn(2+). Residues 31-53 (CPRCGSIMAHHMKPVERWACGKC) form a C4-type zinc finger.

It belongs to the eukaryotic ribosomal protein eS31 family. Part of the 30S ribosomal subunit. Zn(2+) serves as cofactor.

This Sulfurisphaera tokodaii (strain DSM 16993 / JCM 10545 / NBRC 100140 / 7) (Sulfolobus tokodaii) protein is Small ribosomal subunit protein eS31.